A 176-amino-acid polypeptide reads, in one-letter code: Adenine phosphoribosyltransferase (176 aa).

The protein belongs to the purine/pyrimidine phosphoribosyltransferase family. As to quaternary structure, homodimer.

It is found in the cytoplasm. It carries out the reaction AMP + diphosphate = 5-phospho-alpha-D-ribose 1-diphosphate + adenine. The protein operates within purine metabolism; AMP biosynthesis via salvage pathway; AMP from adenine: step 1/1. Functionally, catalyzes a salvage reaction resulting in the formation of AMP, that is energically less costly than de novo synthesis. This chain is Adenine phosphoribosyltransferase, found in Borreliella afzelii (strain PKo) (Borrelia afzelii).